Consider the following 425-residue polypeptide: UDP-N-acetylglucosamine 1-carboxyvinyltransferase (425 aa).

22-23 contacts phosphoenolpyruvate; the sequence is KN. R98 serves as a coordination point for UDP-N-acetyl-alpha-D-glucosamine. The active-site Proton donor is the C122. Position 122 is a 2-(S-cysteinyl)pyruvic acid O-phosphothioketal (C122). UDP-N-acetyl-alpha-D-glucosamine contacts are provided by residues 127–131, D313, and I335; that span reads RPVDQ.

This sequence belongs to the EPSP synthase family. MurA subfamily.

The protein localises to the cytoplasm. The enzyme catalyses phosphoenolpyruvate + UDP-N-acetyl-alpha-D-glucosamine = UDP-N-acetyl-3-O-(1-carboxyvinyl)-alpha-D-glucosamine + phosphate. The protein operates within cell wall biogenesis; peptidoglycan biosynthesis. Functionally, cell wall formation. Adds enolpyruvyl to UDP-N-acetylglucosamine. This Xylella fastidiosa (strain M23) protein is UDP-N-acetylglucosamine 1-carboxyvinyltransferase.